Consider the following 307-residue polypeptide: Probable GTP 3',8-cyclase (307 aa).

In terms of domain architecture, Radical SAM core spans 4 to 222 (ALGREVRSVR…RTFHSREVYR (219 aa)). Arg-13 provides a ligand contact to GTP. Residues Cys-20 and Cys-24 each coordinate [4Fe-4S] cluster. Residue Tyr-26 participates in S-adenosyl-L-methionine binding. A [4Fe-4S] cluster-binding site is contributed by Cys-27. Lys-60 contacts GTP. The S-adenosyl-L-methionine site is built by Gly-64 and Ser-112. Residue Lys-150 participates in GTP binding. [4Fe-4S] cluster-binding residues include Cys-240 and Cys-243. 245-247 (RIR) serves as a coordination point for GTP. Cys-257 contributes to the [4Fe-4S] cluster binding site.

It belongs to the radical SAM superfamily. MoaA family. [4Fe-4S] cluster serves as cofactor.

It carries out the reaction GTP + AH2 + S-adenosyl-L-methionine = (8S)-3',8-cyclo-7,8-dihydroguanosine 5'-triphosphate + 5'-deoxyadenosine + L-methionine + A + H(+). The protein operates within cofactor biosynthesis; molybdopterin biosynthesis. Its function is as follows. Catalyzes the cyclization of GTP to (8S)-3',8-cyclo-7,8-dihydroguanosine 5'-triphosphate. In Methanopyrus kandleri (strain AV19 / DSM 6324 / JCM 9639 / NBRC 100938), this protein is Probable GTP 3',8-cyclase.